The primary structure comprises 556 residues: uncharacterized protein (556 aa).

The disordered stretch occupies residues 69–129; sequence RRGHTSGHAS…SSARSSSTSG (61 aa). Low complexity-rich tracts occupy residues 74-85 and 93-129; these read SGHASEHTSSSR and SMSS…STSG. Residues 379–399 traverse the membrane as a helical segment; the sequence is LGLYIFIGVLLGLIGVIGLFI. An RING-type; atypical zinc finger spans residues 498–541; that stretch reads CTICLCEYSEESPLYRELPCHHIFHPACIDPYLLKNSDLCPLCK.

The protein localises to the vacuole membrane. Its subcellular location is the cell membrane. This is an uncharacterized protein from Schizosaccharomyces pombe (strain 972 / ATCC 24843) (Fission yeast).